The chain runs to 343 residues: Anthranilate phosphoribosyltransferase (343 aa).

Residues Gly-84, 87-88 (GD), Thr-92, 94-97 (NIST), 112-120 (KHGNRGVSS), and Ser-124 each bind 5-phospho-alpha-D-ribose 1-diphosphate. Gly-84 contributes to the anthranilate binding site. Position 96 (Ser-96) interacts with Mg(2+). Asn-115 is a binding site for anthranilate. Arg-170 provides a ligand contact to anthranilate. The Mg(2+) site is built by Asp-229 and Glu-230.

The protein belongs to the anthranilate phosphoribosyltransferase family. In terms of assembly, homodimer. Requires Mg(2+) as cofactor.

It catalyses the reaction N-(5-phospho-beta-D-ribosyl)anthranilate + diphosphate = 5-phospho-alpha-D-ribose 1-diphosphate + anthranilate. The protein operates within amino-acid biosynthesis; L-tryptophan biosynthesis; L-tryptophan from chorismate: step 2/5. Catalyzes the transfer of the phosphoribosyl group of 5-phosphorylribose-1-pyrophosphate (PRPP) to anthranilate to yield N-(5'-phosphoribosyl)-anthranilate (PRA). The sequence is that of Anthranilate phosphoribosyltransferase from Burkholderia cenocepacia (strain ATCC BAA-245 / DSM 16553 / LMG 16656 / NCTC 13227 / J2315 / CF5610) (Burkholderia cepacia (strain J2315)).